We begin with the raw amino-acid sequence, 204 residues long: Neurensin-2 (204 aa).

The next 2 membrane-spanning stretches (helical) occupy residues leucine 66–valine 86 and leucine 122–leucine 142. Residues serine 178 to serine 204 form a disordered region. Polar residues predominate over residues phenylalanine 190–serine 204.

This sequence belongs to the VMP family.

It localises to the membrane. Functionally, may play a role in maintenance and/or transport of vesicles. The protein is Neurensin-2 (NRSN2) of Homo sapiens (Human).